The chain runs to 241 residues: Phosphoadenosine 5'-phosphosulfate reductase (241 aa).

C235 (nucleophile; cysteine thiosulfonate intermediate) is an active-site residue.

This sequence belongs to the PAPS reductase family. CysH subfamily.

Its subcellular location is the cytoplasm. It catalyses the reaction [thioredoxin]-disulfide + sulfite + adenosine 3',5'-bisphosphate + 2 H(+) = [thioredoxin]-dithiol + 3'-phosphoadenylyl sulfate. It participates in sulfur metabolism; hydrogen sulfide biosynthesis; sulfite from sulfate: step 3/3. Catalyzes the formation of sulfite from phosphoadenosine 5'-phosphosulfate (PAPS) using thioredoxin as an electron donor. The sequence is that of Phosphoadenosine 5'-phosphosulfate reductase from Xanthomonas oryzae pv. oryzae (strain MAFF 311018).